A 360-amino-acid polypeptide reads, in one-letter code: Peptide chain release factor 1 (360 aa).

Position 235 is an N5-methylglutamine (Q235). The tract at residues 285-305 (KRQEAEASERRNLLGSGDRSD) is disordered.

This sequence belongs to the prokaryotic/mitochondrial release factor family. In terms of processing, methylated by PrmC. Methylation increases the termination efficiency of RF1.

Its subcellular location is the cytoplasm. Peptide chain release factor 1 directs the termination of translation in response to the peptide chain termination codons UAG and UAA. The protein is Peptide chain release factor 1 of Proteus mirabilis (strain HI4320).